A 133-amino-acid polypeptide reads, in one-letter code: C-C motif chemokine 21b (133 aa).

Positions 1–23 (MAQMMTLSLLSLVLALCIPWTQG) are cleaved as a signal peptide. 3 cysteine pairs are disulfide-bonded: C31–C57, C32–C75, and C103–C122. A disordered region spans residues 87 to 133 (MRRLDQPPAPGKQSPGCRKNRGTSKSGKKGKGSKGCKRTEQTQPSRG). Residues 98-133 (KQSPGCRKNRGTSKSGKKGKGSKGCKRTEQTQPSRG) form a C-terminal basic extension region. Positions 104–122 (RKNRGTSKSGKKGKGSKGC) are enriched in basic residues.

Belongs to the intercrine beta (chemokine CC) family. In terms of assembly, binds to CCR7 and to CXCR3. Interacts with PDPN; relocalizes PDPN to the basolateral membrane. Interacts with GPR174. Expressed strongly in lung, spleen, thymus, peripheral and mesentric lymph nodes. Also expressed in the testis, kidney, liver, and heart.

The protein resides in the secreted. Functionally, inhibits hemopoiesis and stimulates chemotaxis. Chemotactic in vitro for thymocytes and activated T-cells, but not for B-cells, macrophages, or neutrophils. Potent mesangial cell chemoattractant. Shows preferential activity towards naive T-cells. May play a role in mediating homing of lymphocytes to secondary lymphoid organs. In Mus musculus (Mouse), this protein is C-C motif chemokine 21b (Ccl21b).